The following is a 401-amino-acid chain: uncharacterized protein (401 aa).

This is an uncharacterized protein from Acanthamoeba polyphaga mimivirus (APMV).